Reading from the N-terminus, the 311-residue chain is Probable cell division protein WhiA (311 aa).

The H-T-H motif DNA-binding region spans 274-307 (SLKELGSLLTPPLTKSGVNHRFRKLELIAEKIRN).

It belongs to the WhiA family.

Functionally, involved in cell division and chromosome segregation. This chain is Probable cell division protein WhiA, found in Carboxydothermus hydrogenoformans (strain ATCC BAA-161 / DSM 6008 / Z-2901).